Reading from the N-terminus, the 512-residue chain is Glycine betaine transporter OpuD (512 aa).

A run of 12 helical transmembrane segments spans residues 5-25 (ISSVFWIVIAITAAAVLWGVI), 45-65 (FGWYYLLVVSLFVGFCLFLIF), 82-102 (FGLLSWFAMLFSAGMGIGLVF), 135-155 (FFHWGLHAWAIYAIVALCIAY), 186-206 (IDCIAVFATVVGVSTSLGLGA), 222-242 (AFIVQLVLIIIVTVLFLLSAW), 257-277 (MVLAGLLMLFMLVVGPTVLIM), 312-332 (WTIFYWAWWISWSPFVGIFIA), 343-363 (FLIGVLVTPCILTFLWFSIFG), 395-415 (LTMVTSILALILIAVFFITSA), 441-461 (WGIIQSAMAAVLLYSGGLAAL), and 464-484 (TAILAALPFSIVILLMIASLY).

Belongs to the BCCT transporter (TC 2.A.15) family.

It localises to the cell membrane. Activity is stimulated by high osmolarity. High-affinity uptake of glycine betaine. Does not mediate either carnitine or choline uptake. The protein is Glycine betaine transporter OpuD (opuD) of Bacillus subtilis (strain 168).